The following is a 351-amino-acid chain: Autoinducer 2 import system permease protein LsrC (351 aa).

9 helical membrane passes run 14–34, 39–59, 70–90, 93–113, 115–135, 155–175, 213–233, 252–272, and 284–304; these read LLAI…YFSL, MIFS…LVML, ITGL…GLAA, LFAL…VTWL, IPAI…MLLL, ILFS…AMAW, MNGV…GFIP, GISL…AFLL, and LPAW…LVFD.

The protein belongs to the binding-protein-dependent transport system permease family. AraH/RbsC subfamily. In terms of assembly, the complex is composed of two ATP-binding proteins (LsrA), two transmembrane proteins (LsrC and LsrD) and a solute-binding protein (LsrB).

It localises to the cell inner membrane. In terms of biological role, part of the ABC transporter complex LsrABCD involved in autoinducer 2 (AI-2) import. Probably responsible for the translocation of the substrate across the membrane. The sequence is that of Autoinducer 2 import system permease protein LsrC (lsrC) from Yersinia pestis bv. Antiqua (strain Antiqua).